The following is a 146-amino-acid chain: MORN repeat-containing protein 4 (146 aa).

MORN repeat units follow at residues 16-38 (YRGE…DGGT), 39-61 (YLGH…DGSR), 62-84 (YEGE…DNMT), and 85-107 (FEGE…DGSH).

In terms of assembly, interacts with MYO3A.

The protein localises to the cytoplasm. Its subcellular location is the cell projection. The protein resides in the filopodium tip. It is found in the stereocilium. Plays a role in promoting axonal degeneration following neuronal injury by toxic insult or trauma. The protein is MORN repeat-containing protein 4 (Morn4) of Rattus norvegicus (Rat).